The sequence spans 193 residues: Non-specific lipid transfer protein GPI-anchored 10 (193 aa).

The signal sequence occupies residues Met-1 to Ala-24. Cystine bridges form between Cys-30–Cys-71, Cys-40–Cys-55, Cys-56–Cys-98, and Cys-69–Cys-107. Residues Asn-76, Asn-87, and Asn-103 are each glycosylated (N-linked (GlcNAc...) asparagine). A disordered region spans residues Ser-109 to Asn-140. A compositionally biased stretch (low complexity) spans Pro-116–Ser-132. Asn-140 carries an N-linked (GlcNAc...) asparagine glycan. Residue Ser-168 is the site of GPI-anchor amidated serine attachment. The propeptide at Ser-169–Ile-193 is removed in mature form.

Belongs to the plant LTP family.

The protein resides in the cell membrane. Functionally, probable lipid transfer protein. The polypeptide is Non-specific lipid transfer protein GPI-anchored 10 (Arabidopsis thaliana (Mouse-ear cress)).